The chain runs to 224 residues: Uracil phosphoribosyltransferase (224 aa).

Arg92 contacts 5-phospho-alpha-D-ribose 1-diphosphate. Lys109 contributes to the GTP binding site. 5-phospho-alpha-D-ribose 1-diphosphate is bound by residues Arg117 and 145 to 153; that span reads DPMLATGGT. Residues Ile210 and 215-217 each bind uracil; that span reads GDA. Position 216 (Asp216) interacts with 5-phospho-alpha-D-ribose 1-diphosphate.

Belongs to the UPRTase family. Requires Mg(2+) as cofactor.

It carries out the reaction UMP + diphosphate = 5-phospho-alpha-D-ribose 1-diphosphate + uracil. Its pathway is pyrimidine metabolism; UMP biosynthesis via salvage pathway; UMP from uracil: step 1/1. With respect to regulation, allosterically activated by GTP. In terms of biological role, catalyzes the conversion of uracil and 5-phospho-alpha-D-ribose 1-diphosphate (PRPP) to UMP and diphosphate. In Nicotiana tabacum (Common tobacco), this protein is Uracil phosphoribosyltransferase (UPP).